The chain runs to 513 residues: Light-independent protochlorophyllide reductase subunit B (513 aa).

Position 36 (aspartate 36) interacts with [4Fe-4S] cluster. Aspartate 299 serves as the catalytic Proton donor. 434-435 (GM) contacts substrate.

Belongs to the ChlB/BchB/BchZ family. Protochlorophyllide reductase is composed of three subunits; ChlL, ChlN and ChlB. Forms a heterotetramer of two ChlB and two ChlN subunits. [4Fe-4S] cluster is required as a cofactor.

The protein resides in the plastid. It localises to the chloroplast. The enzyme catalyses chlorophyllide a + oxidized 2[4Fe-4S]-[ferredoxin] + 2 ADP + 2 phosphate = protochlorophyllide a + reduced 2[4Fe-4S]-[ferredoxin] + 2 ATP + 2 H2O. It participates in porphyrin-containing compound metabolism; chlorophyll biosynthesis (light-independent). Functionally, component of the dark-operative protochlorophyllide reductase (DPOR) that uses Mg-ATP and reduced ferredoxin to reduce ring D of protochlorophyllide (Pchlide) to form chlorophyllide a (Chlide). This reaction is light-independent. The NB-protein (ChlN-ChlB) is the catalytic component of the complex. The protein is Light-independent protochlorophyllide reductase subunit B of Zygnema circumcarinatum (Green alga).